The sequence spans 180 residues: Inosine/xanthosine triphosphatase (180 aa).

A substrate-binding site is contributed by 8–13 (TTNPAK). Mg(2+) contacts are provided by D38 and E68. Residue 68 to 69 (EA) participates in substrate binding.

This sequence belongs to the YjjX NTPase family. In terms of assembly, homodimer. Requires Mg(2+) as cofactor. The cofactor is Mn(2+).

The catalysed reaction is XTP + H2O = XDP + phosphate + H(+). The enzyme catalyses ITP + H2O = IDP + phosphate + H(+). In terms of biological role, phosphatase that hydrolyzes non-canonical purine nucleotides such as XTP and ITP to their respective diphosphate derivatives. Probably excludes non-canonical purines from DNA/RNA precursor pool, thus preventing their incorporation into DNA/RNA and avoiding chromosomal lesions. This chain is Inosine/xanthosine triphosphatase, found in Yersinia pseudotuberculosis serotype IB (strain PB1/+).